A 938-amino-acid chain; its full sequence is Isoleucine--tRNA ligase (938 aa).

The short motif at 58–68 (PYANGNIHIGH) is the 'HIGH' region element. An L-isoleucyl-5'-AMP-binding site is contributed by E562. Residues 603-607 (KMSKS) carry the 'KMSKS' region motif. K606 lines the ATP pocket. Zn(2+) contacts are provided by C901, C904, C921, and C924.

Belongs to the class-I aminoacyl-tRNA synthetase family. IleS type 1 subfamily. As to quaternary structure, monomer. Requires Zn(2+) as cofactor.

Its subcellular location is the cytoplasm. The enzyme catalyses tRNA(Ile) + L-isoleucine + ATP = L-isoleucyl-tRNA(Ile) + AMP + diphosphate. In terms of biological role, catalyzes the attachment of isoleucine to tRNA(Ile). As IleRS can inadvertently accommodate and process structurally similar amino acids such as valine, to avoid such errors it has two additional distinct tRNA(Ile)-dependent editing activities. One activity is designated as 'pretransfer' editing and involves the hydrolysis of activated Val-AMP. The other activity is designated 'posttransfer' editing and involves deacylation of mischarged Val-tRNA(Ile). The sequence is that of Isoleucine--tRNA ligase from Actinobacillus pleuropneumoniae serotype 5b (strain L20).